The chain runs to 356 residues: MQEITPITLNAPLVLLTGAAGWLGGRVAAALTTGLPDAGLLANGSFRVRALVPKGEDISELRKQGMEIATGDLREMQSVRAFVAGAEGAVLIHMAGIIHPKNVAQFEAINTQGTINLVTAAQKAGVRRAVVMSSNSPVGFNPHSDHRFTEESPYDPHAGYGRSKMLMERALRAEVAAGSTMEIVIVRAPWFYGPNQPSRQTLFFKMVKEGKFPIIGSGRNRRSMGYTDNLAQGILLAAVHERAAGDIFWLADETPYTMNEIIEVVGMVLHEDFGMTVKPNPFRLPDIVGGAATILDATLQYAGIYHQKIHVLSEMNKTIACDITKARKVLGYAPKIALREGMQRSVDWCVKNGQSF.

It belongs to the NAD(P)-dependent epimerase/dehydratase family. The cofactor is NAD(+). It depends on NADP(+) as a cofactor.

Functionally, putative nucleotide sugar epimerase/dehydrogenase. This is an uncharacterized protein from Sinorhizobium fredii (strain NBRC 101917 / NGR234).